A 674-amino-acid polypeptide reads, in one-letter code: DNA ligase (674 aa).

Residues D35–D39, S82–L83, and E116 contribute to the NAD(+) site. K118 acts as the N6-AMP-lysine intermediate in catalysis. R139, E174, K282, and K306 together coordinate NAD(+). 4 residues coordinate Zn(2+): C400, C403, C418, and C424. The BRCT domain maps to S593–V674.

It belongs to the NAD-dependent DNA ligase family. LigA subfamily. It depends on Mg(2+) as a cofactor. Requires Mn(2+) as cofactor.

It carries out the reaction NAD(+) + (deoxyribonucleotide)n-3'-hydroxyl + 5'-phospho-(deoxyribonucleotide)m = (deoxyribonucleotide)n+m + AMP + beta-nicotinamide D-nucleotide.. Functionally, DNA ligase that catalyzes the formation of phosphodiester linkages between 5'-phosphoryl and 3'-hydroxyl groups in double-stranded DNA using NAD as a coenzyme and as the energy source for the reaction. It is essential for DNA replication and repair of damaged DNA. In Ehrlichia ruminantium (strain Welgevonden), this protein is DNA ligase.